Consider the following 962-residue polypeptide: UBP9-binding protein bun107 (962 aa).

6 WD repeats span residues 25–69 (DANC…GKAS), 77–116 (AHSA…ASCL), 121–162 (EHTD…EVMR), 172–211 (VVGP…RITD), 214–253 (GHTD…CLFS), and 302–339 (KQDA…NQDV). Low complexity predominate over residues 568–578 (SPLRIRSRPSP). Disordered stretches follow at residues 568-615 (SPLR…QIPS) and 702-758 (RAAS…PREL). Polar residues predominate over residues 707–723 (RVFSTGTSVTSPQALSK). Serine 717 bears the Phosphoserine mark. Positions 724 to 738 (TNNTVNNAANTENNT) are enriched in low complexity.

Interacts with ubp9 and bun62.

The protein resides in the cytoplasm. It is found in the cell tip. Required for the ubp9 recruitment to septa and cell tips but also for its enzymatic activity at these specific locations. This is UBP9-binding protein bun107 (bun107) from Schizosaccharomyces pombe (strain 972 / ATCC 24843) (Fission yeast).